The chain runs to 808 residues: Beta-catenin/armadillo-related protein 1 (808 aa).

An involved in transcriptional activation region spans residues 1–85; that stretch reads MDLDPNLVIN…SSHLSGMSSM (85 aa). 3 ARM repeats span residues 118 to 160, 165 to 209, and 369 to 408; these read RAIP…NETK, CVIF…RAIS, and SDVP…NLVA. Positions 541-808 are involved in transcriptional activation; that stretch reads NVQDVIEGVR…DQYPYRQGRF (268 aa). The disordered stretch occupies residues 702 to 808; the sequence is TYEGAGEQWS…DQYPYRQGRF (107 aa). A compositionally biased stretch (polar residues) spans 723–736; the sequence is YCNSSGRDSSKTYN. Low complexity predominate over residues 737 to 750; it reads SPMYHSPPSMYPEY. A compositionally biased stretch (polar residues) spans 786-798; that stretch reads NIPSNQGPSSHLS.

The protein belongs to the beta-catenin family. In terms of assembly, interacts with apr-1, axl-1, daf-16, lin-23, and pop-1 (via acidic region in N-terminus 1-44). Interacts (via ARM repeats) with pry-1.

It localises to the cytoplasm. It is found in the nucleus. Its subcellular location is the membrane. The protein resides in the cell junction. In terms of biological role, participates in the Wnt signaling pathway which affects cell fate and may regulate the stem cell divisions of seam cells during larval development. Functions as a transcriptional activator but is dependent on the interaction with pop-1. Involved in maintaining lin-39 Hox expression and regulating glr-1 abundance at the synapses. Required for mab-5 expression during Q neuroblast migration and for oxidative stress-induced daf-16 signaling. Has roles in egg laying, vulva precursor cell fate determination, Q neuroblast migration, posterior ectodermal cell P12 specification, movement, body length, male tail development and dauer induction. Functionally redundant to wrm-1 and hmp-2. The protein is Beta-catenin/armadillo-related protein 1 (bar-1) of Caenorhabditis briggsae.